We begin with the raw amino-acid sequence, 325 residues long: Holliday junction branch migration complex subunit RuvB (325 aa).

Positions methionine 1 to tyrosine 172 are large ATPase domain (RuvB-L). Residues leucine 11, arginine 12, glycine 53, lysine 56, threonine 57, threonine 58, glutamate 119–phenylalanine 121, arginine 162, tyrosine 172, and arginine 209 each bind ATP. Mg(2+) is bound at residue threonine 57. The tract at residues asparagine 173–aspartate 243 is small ATPAse domain (RuvB-S). Positions aspartate 246–phenylalanine 325 are head domain (RuvB-H). Positions 301 and 306 each coordinate DNA.

The protein belongs to the RuvB family. In terms of assembly, homohexamer. Forms an RuvA(8)-RuvB(12)-Holliday junction (HJ) complex. HJ DNA is sandwiched between 2 RuvA tetramers; dsDNA enters through RuvA and exits via RuvB. An RuvB hexamer assembles on each DNA strand where it exits the tetramer. Each RuvB hexamer is contacted by two RuvA subunits (via domain III) on 2 adjacent RuvB subunits; this complex drives branch migration. In the full resolvosome a probable DNA-RuvA(4)-RuvB(12)-RuvC(2) complex forms which resolves the HJ.

The protein resides in the cytoplasm. It catalyses the reaction ATP + H2O = ADP + phosphate + H(+). Functionally, the RuvA-RuvB-RuvC complex processes Holliday junction (HJ) DNA during genetic recombination and DNA repair, while the RuvA-RuvB complex plays an important role in the rescue of blocked DNA replication forks via replication fork reversal (RFR). RuvA specifically binds to HJ cruciform DNA, conferring on it an open structure. The RuvB hexamer acts as an ATP-dependent pump, pulling dsDNA into and through the RuvAB complex. RuvB forms 2 homohexamers on either side of HJ DNA bound by 1 or 2 RuvA tetramers; 4 subunits per hexamer contact DNA at a time. Coordinated motions by a converter formed by DNA-disengaged RuvB subunits stimulates ATP hydrolysis and nucleotide exchange. Immobilization of the converter enables RuvB to convert the ATP-contained energy into a lever motion, pulling 2 nucleotides of DNA out of the RuvA tetramer per ATP hydrolyzed, thus driving DNA branch migration. The RuvB motors rotate together with the DNA substrate, which together with the progressing nucleotide cycle form the mechanistic basis for DNA recombination by continuous HJ branch migration. Branch migration allows RuvC to scan DNA until it finds its consensus sequence, where it cleaves and resolves cruciform DNA. In Thermodesulfovibrio yellowstonii (strain ATCC 51303 / DSM 11347 / YP87), this protein is Holliday junction branch migration complex subunit RuvB.